The chain runs to 211 residues: DNA-directed RNA polymerases I, II, and III subunit RPABC1 (211 aa).

It belongs to the archaeal Rpo5/eukaryotic RPB5 RNA polymerase subunit family. As to quaternary structure, component of the RNA polymerase I (Pol I), RNA polymerase II (Pol II) and RNA polymerase III (Pol III) complexes consisting of at least 13, 12 and 17 subunits, respectively. In RNA Pol II, this subunit is present in 2-fold molar excess over the other subunits.

Its subcellular location is the nucleus. Functionally, DNA-dependent RNA polymerase catalyzes the transcription of DNA into RNA using the four ribonucleoside triphosphates as substrates. Common component of RNA polymerases I, II and III which synthesize ribosomal RNA precursors, mRNA precursors and many functional non-coding RNAs, and small RNAs, such as 5S rRNA and tRNAs, respectively. Pol II is the central component of the basal RNA polymerase II transcription machinery. Pols are composed of mobile elements that move relative to each other. In Pol II, RPB5 is part of the lower jaw surrounding the central large cleft and thought to grab the incoming DNA template. Seems to be the major component in this process. This is DNA-directed RNA polymerases I, II, and III subunit RPABC1 from Caenorhabditis briggsae.